The sequence spans 235 residues: Ion-translocating oxidoreductase complex subunit E (235 aa).

Transmembrane regions (helical) follow at residues 63–83 (LGLG…ISLF), 93–113 (IPIY…LMNA), 117–137 (TLYQ…IIIG), 152–172 (IWDG…LGAL), and 206–226 (SFLL…LLAI).

The protein belongs to the NqrDE/RnfAE family. As to quaternary structure, the complex is composed of six subunits: RnfA, RnfB, RnfC, RnfD, RnfE and RnfG.

The protein localises to the cell inner membrane. In terms of biological role, part of a membrane-bound complex that couples electron transfer with translocation of ions across the membrane. The polypeptide is Ion-translocating oxidoreductase complex subunit E (Haemophilus influenzae (strain ATCC 51907 / DSM 11121 / KW20 / Rd)).